Reading from the N-terminus, the 974-residue chain is UvrABC system protein A (974 aa).

34-41 is a binding site for ATP; that stretch reads GLSGSGKS. ABC transporter domains lie at 331 to 610 and 630 to 959; these read WARS…TNSL and ISKT…QFLK. Residue 663-670 coordinates ATP; that stretch reads GVSGGGKS. Residues 762–788 form a C4-type zinc finger; sequence CEACQGDGVIKIEMHFLPDVYVTCDVC.

It belongs to the ABC transporter superfamily. UvrA family. Forms a heterotetramer with UvrB during the search for lesions.

It is found in the cytoplasm. Functionally, the UvrABC repair system catalyzes the recognition and processing of DNA lesions. UvrA is an ATPase and a DNA-binding protein. A damage recognition complex composed of 2 UvrA and 2 UvrB subunits scans DNA for abnormalities. When the presence of a lesion has been verified by UvrB, the UvrA molecules dissociate. The protein is UvrABC system protein A of Brucella suis biovar 1 (strain 1330).